The sequence spans 1266 residues: Formin-like protein 13 (1266 aa).

The region spanning tyrosine 9–serine 193 is the Phosphatase tensin-type domain. Catalysis depends on cysteine 126, which acts as the Phosphocysteine intermediate. The C2 tensin-type domain occupies aspartate 199–methionine 337. Disordered regions lie at residues lysine 497–serine 568, lysine 597–arginine 825, serine 881–glutamate 902, and glutamine 1210–proline 1266. Residues proline 529 to valine 538 show a composition bias toward pro residues. Over residues glutamate 617–valine 644 the composition is skewed to polar residues. Composition is skewed to pro residues over residues leucine 686–methionine 698, valine 706–proline 742, proline 754–leucine 781, and proline 806–proline 815. The 398-residue stretch at valine 829–lysine 1226 folds into the FH2 domain. Composition is skewed to basic and acidic residues over residues glycine 889–glutamate 902, glutamine 1210–lysine 1248, and glutamate 1255–proline 1266.

Belongs to the formin-like family. Class-II subfamily.

This is Formin-like protein 13 (FH13) from Arabidopsis thaliana (Mouse-ear cress).